A 234-amino-acid polypeptide reads, in one-letter code: Accessory gland protein Acp29AB (234 aa).

Positions 1–21 (MYASNLLYLLALWNLWDLSGG) are cleaved as a signal peptide. N-linked (GlcNAc...) asparagine glycosylation is found at asparagine 61 and asparagine 164. One can recognise a C-type lectin domain in the interval 137-234 (VTCRKMNGHL…SFVCQADQWA (98 aa)). Intrachain disulfides connect cysteine 139/cysteine 228 and cysteine 207/cysteine 220.

In terms of tissue distribution, main cells of the accessory gland and in seminal fluid.

It localises to the secreted. In terms of biological role, responsible for physiological and behavioral changes in mated female flies. The polypeptide is Accessory gland protein Acp29AB (Acp29AB) (Drosophila melanogaster (Fruit fly)).